The sequence spans 90 residues: Large ribosomal subunit protein uL23c (90 aa).

Belongs to the universal ribosomal protein uL23 family. In terms of assembly, part of the 50S ribosomal subunit.

It localises to the plastid. The protein resides in the chloroplast. Functionally, binds to 23S rRNA. The chain is Large ribosomal subunit protein uL23c (rpl23) from Tetradesmus obliquus (Green alga).